A 515-amino-acid chain; its full sequence is Cell division control protein 6 homolog (515 aa).

Residues 1–24 are compositionally biased toward low complexity; it reads MPTLRSATASASTAGTASPTAIAT. The interval 1 to 70 is disordered; sequence MPTLRSATAS…TPKLLSASPR (70 aa). Polar residues predominate over residues 43–52; sequence DASQFTSPHK.

It belongs to the CDC6/cdc18 family.

The protein localises to the nucleus. In terms of biological role, may be involved in the initiation of DNA replication. The chain is Cell division control protein 6 homolog from Oryza sativa subsp. japonica (Rice).